The primary structure comprises 461 residues: Argininosuccinate lyase (461 aa).

The protein belongs to the lyase 1 family. Argininosuccinate lyase subfamily.

It is found in the cytoplasm. It catalyses the reaction 2-(N(omega)-L-arginino)succinate = fumarate + L-arginine. It participates in amino-acid biosynthesis; L-arginine biosynthesis; L-arginine from L-ornithine and carbamoyl phosphate: step 3/3. This chain is Argininosuccinate lyase, found in Aeromonas salmonicida (strain A449).